The primary structure comprises 921 residues: Isoleucine--tRNA ligase (921 aa).

Positions 57 to 67 match the 'HIGH' region motif; the sequence is PYANGDIHMGH. Glutamate 552 provides a ligand contact to L-isoleucyl-5'-AMP. The short motif at 593-597 is the 'KMSKS' region element; sequence KMSKS. An ATP-binding site is contributed by lysine 596. Zn(2+) contacts are provided by cysteine 888, cysteine 891, cysteine 908, and cysteine 911.

Belongs to the class-I aminoacyl-tRNA synthetase family. IleS type 1 subfamily. Monomer. Requires Zn(2+) as cofactor.

It localises to the cytoplasm. The catalysed reaction is tRNA(Ile) + L-isoleucine + ATP = L-isoleucyl-tRNA(Ile) + AMP + diphosphate. Its function is as follows. Catalyzes the attachment of isoleucine to tRNA(Ile). As IleRS can inadvertently accommodate and process structurally similar amino acids such as valine, to avoid such errors it has two additional distinct tRNA(Ile)-dependent editing activities. One activity is designated as 'pretransfer' editing and involves the hydrolysis of activated Val-AMP. The other activity is designated 'posttransfer' editing and involves deacylation of mischarged Val-tRNA(Ile). This chain is Isoleucine--tRNA ligase, found in Bacillus anthracis (strain A0248).